A 99-amino-acid chain; its full sequence is MAAKRIGAGKSGGGDPNILARISNSEIVSQGRRAAGDAVEVSKKLLRSTGKAAWIAGTTFLILVVPLIIEMDREAQINEIELQQASLLGAPPSPMQRGL.

The Cytoplasmic portion of the chain corresponds to 2 to 51; it reads AAKRIGAGKSGGGDPNILARISNSEIVSQGRRAAGDAVEVSKKLLRSTGK. Residues 52 to 69 form a helical membrane-spanning segment; it reads AAWIAGTTFLILVVPLII. At 70–99 the chain is on the mitochondrial intermembrane side; the sequence is EMDREAQINEIELQQASLLGAPPSPMQRGL.

It belongs to the Tom22 family. As to quaternary structure, forms part of the preprotein translocase complex of the outer mitochondrial membrane (TOM complex) which consists of at least 6 different proteins (TOM5, TOM6, TOM7, TOM20, TOM22/TOM9 and TOM40). In terms of tissue distribution, expressed in young cotyledons, roots, flowers and leaves.

It localises to the mitochondrion outer membrane. Its function is as follows. Central component of the receptor complex responsible for the recognition and translocation of cytosolically synthesized mitochondrial preproteins. Together with TOM20 functions as the transit peptide receptor at the surface of the mitochondrion outer membrane and facilitates the movement of preproteins into the translocation pore. The protein is Mitochondrial import receptor subunit TOM9-2 (TOM9-2) of Arabidopsis thaliana (Mouse-ear cress).